The primary structure comprises 566 residues: Tetratricopeptide repeat protein 34 (566 aa).

The segment at 1-29 is disordered; the sequence is MLQRSPRAGPSRAQGRREAAETGGPTTQE. TPR repeat units follow at residues 50 to 83, 178 to 211, 212 to 245, 306 to 339, 341 to 373, 424 to 457, 464 to 497, and 512 to 545; these read EASRLLAADALYRLGRLEETHKALLVALSRRPQA, SESLLARARCYGFLGQKKTAMFDFNTVLRAEPGN, VQALCGRALVHLALDQLQEAVDDIVSALKLGPGT, PHWHLLLADILMAQGSYEEAGTHLEKALHRAPTS, AARARLGLLQLKKGDVPGAARDLQSLAEVDAPD, ACHLRLRATCLAELQEFGRALRDLDHVLQEALGD, AEDFCRQGRLLLSLGDEAAAAGAFAQALKLAPSL, and ARMFLLRGQCCLEEQRHAEAWTAVESGLLVDPDH.

The protein is Tetratricopeptide repeat protein 34 (TTC34) of Homo sapiens (Human).